We begin with the raw amino-acid sequence, 272 residues long: 3-methyl-2-oxobutanoate hydroxymethyltransferase (272 aa).

2 residues coordinate Mg(2+): Asp51 and Asp90. 3-methyl-2-oxobutanoate contacts are provided by residues 51–52 (DS), Asp90, and Lys118. Residue Glu120 coordinates Mg(2+). The Proton acceptor role is filled by Glu187.

It belongs to the PanB family. Homodecamer; pentamer of dimers. Requires Mg(2+) as cofactor.

It localises to the cytoplasm. The enzyme catalyses 3-methyl-2-oxobutanoate + (6R)-5,10-methylene-5,6,7,8-tetrahydrofolate + H2O = 2-dehydropantoate + (6S)-5,6,7,8-tetrahydrofolate. Its pathway is cofactor biosynthesis; (R)-pantothenate biosynthesis; (R)-pantoate from 3-methyl-2-oxobutanoate: step 1/2. Functionally, catalyzes the reversible reaction in which hydroxymethyl group from 5,10-methylenetetrahydrofolate is transferred onto alpha-ketoisovalerate to form ketopantoate. This Xylella fastidiosa (strain M23) protein is 3-methyl-2-oxobutanoate hydroxymethyltransferase.